Reading from the N-terminus, the 379-residue chain is Protein RecA (379 aa).

79–86 contributes to the ATP binding site; the sequence is GPESSGKT.

Belongs to the RecA family.

It localises to the cytoplasm. In terms of biological role, can catalyze the hydrolysis of ATP in the presence of single-stranded DNA, the ATP-dependent uptake of single-stranded DNA by duplex DNA, and the ATP-dependent hybridization of homologous single-stranded DNAs. It interacts with LexA causing its activation and leading to its autocatalytic cleavage. This chain is Protein RecA, found in Streptococcus agalactiae serotype III (strain NEM316).